A 216-amino-acid polypeptide reads, in one-letter code: Pyrophosphatase PpaX (216 aa).

Catalysis depends on D9, which acts as the Nucleophile.

Belongs to the HAD-like hydrolase superfamily. PpaX family. Mg(2+) is required as a cofactor.

It carries out the reaction diphosphate + H2O = 2 phosphate + H(+). Its function is as follows. Hydrolyzes pyrophosphate formed during P-Ser-HPr dephosphorylation by HPrK/P. Might play a role in controlling the intracellular pyrophosphate pool. This Bacillus cereus (strain AH820) protein is Pyrophosphatase PpaX.